The primary structure comprises 214 residues: Large ribosomal subunit protein uL3 (214 aa).

Residues 132 to 145 (SNRASHGNSVTTRA) show a composition bias toward polar residues. The interval 132-155 (SNRASHGNSVTTRAPGSIGQAQDP) is disordered. An N5-methylglutamine modification is found at Q153.

Belongs to the universal ribosomal protein uL3 family. As to quaternary structure, part of the 50S ribosomal subunit. Forms a cluster with proteins L14 and L19. Methylated by PrmB.

Functionally, one of the primary rRNA binding proteins, it binds directly near the 3'-end of the 23S rRNA, where it nucleates assembly of the 50S subunit. This Laribacter hongkongensis (strain HLHK9) protein is Large ribosomal subunit protein uL3.